Here is a 97-residue protein sequence, read N- to C-terminus: Defensin-like protein 245 (97 aa).

A signal peptide spans 1 to 24; that stretch reads MKFAAILLVTCVLFSLLPSHLSQG. 4 disulfides stabilise this stretch: cysteine 39-cysteine 96, cysteine 50-cysteine 79, cysteine 58-cysteine 89, and cysteine 77-cysteine 91.

This sequence belongs to the DEFL family. In terms of tissue distribution, flower buds and roots.

Its subcellular location is the secreted. The chain is Defensin-like protein 245 (SCRL4) from Arabidopsis thaliana (Mouse-ear cress).